We begin with the raw amino-acid sequence, 520 residues long: Putative cytochrome P450 CYP13A5 (520 aa).

C464 is a binding site for heme.

The protein belongs to the cytochrome P450 family. Requires heme as cofactor.

Functionally, cytochromes P450 are a group of heme-thiolate monooxygenases. They oxidize a variety of structurally unrelated compounds, including steroids, fatty acids, and xenobiotics. This Caenorhabditis elegans protein is Putative cytochrome P450 CYP13A5 (cyp-13A5).